The following is a 125-amino-acid chain: MGPGGPLLSPSRGFLLCKTGWHSNRLLGDCGPHTPVSTALSFIAVGMAAPSMKERQVCWGARDEYWKCLDENLEDASQCKKLRSSFESSCPQQWIKYFDKRRDYLKFKEKFEAGQFEPSETTAKS.

The residue at position 2 (glycine 2) is an N-acetylalanine. One can recognise a CHCH domain in the interval 55–98 (RQVCWGARDEYWKCLDENLEDASQCKKLRSSFESSCPQQWIKYF). A Cx9C motif motif is present at residues 58–68 (CWGARDEYWKC). 2 cysteine pairs are disulfide-bonded: cysteine 58–cysteine 90 and cysteine 68–cysteine 79. The short motif at 79 to 90 (CKKLRSSFESSC) is the Cx10C motif element.

The protein belongs to the cytochrome c oxidase subunit 6B family. As to quaternary structure, interacts with COA1. Found in a complex with TMEM177, COX20, MT-CO2/COX2, COX18, SCO1 and SCO2. Interacts with MT-CO2/COX2 and SCO2. Interacts with SCO1. Interacts with COX20 in a MT-CO2/COX2- and COX18-dependent manner. Interacts with COX16.

Its subcellular location is the mitochondrion intermembrane space. In terms of biological role, involved in the maturation of the mitochondrial respiratory chain complex IV subunit MT-CO2/COX2. Thereby, may regulate early steps of complex IV assembly. Mitochondrial respiratory chain complex IV or cytochrome c oxidase is the component of the respiratory chain that catalyzes the transfer of electrons from intermembrane space cytochrome c to molecular oxygen in the matrix and as a consequence contributes to the proton gradient involved in mitochondrial ATP synthesis. May also be required for efficient formation of respiratory supercomplexes comprised of complexes III and IV. In Homo sapiens (Human), this protein is Cytochrome c oxidase assembly factor 6 homolog (COA6).